A 221-amino-acid chain; its full sequence is Small ribosomal subunit protein uS3c (221 aa).

Residues 39-109 enclose the KH type-2 domain; the sequence is LRDYLKTRLA…RVIVHVVEIA (71 aa).

Belongs to the universal ribosomal protein uS3 family. Part of the 30S ribosomal subunit.

The protein resides in the plastid. The protein localises to the chloroplast. The protein is Small ribosomal subunit protein uS3c (rps3) of Nephroselmis olivacea (Green alga).